An 844-amino-acid chain; its full sequence is Meiosis-specific protein PAIR3 (844 aa).

Disordered stretches follow at residues 41-389, 418-506, 532-604, and 616-669; these read TSSV…RERR, KLSS…RFSD, DDLF…QISI, and WLSD…EPEK. The span at 106–120 shows a compositional bias: polar residues; the sequence is QPDDNAIEQTGTFSF. Composition is skewed to basic and acidic residues over residues 122 to 134 and 145 to 164; these read TRRE…DQLD and RQVE…RMKL. 2 stretches are compositionally biased toward polar residues: residues 191-208 and 218-229; these read QPKS…QKVF and TPAQFNSQTANK. 2 stretches are compositionally biased toward basic and acidic residues: residues 256-270 and 324-363; these read RKKE…DKSG and AKVE…KGEK. Polar residues-rich tracts occupy residues 364–382 and 420–440; these read TNSF…SCSR and SSPQ…SPQQ. The span at 441-456 shows a compositional bias: basic and acidic residues; sequence KENDNTHIPEASDRTA. Over residues 459–473 the composition is skewed to low complexity; the sequence is NSFNSTPSPAANPSP. Residues 545–554 show a composition bias toward polar residues; the sequence is RSRSTSFTSD. The segment covering 616–640 has biased composition (basic and acidic residues); the sequence is WLSDVDSPDKSSIEHLGRKSHLKEG. Polar residues predominate over residues 646 to 661; it reads QLTSPTHFATSGTQET. Residues 731–765 are a coiled coil; the sequence is VNAGKSKRKRLESTFEEQQEKLRILHEKFKEEVNQ.

As to expression, expressed in pollen mother cells and the ovule tissues during meiosis.

Its subcellular location is the chromosome. The protein resides in the nucleus. In terms of biological role, plays a crucial role in homologous chromosome pairing and synapsis in meiosis. Does not seem required for cytokinesis. Is essential for meiotic bouquet formation, homologous chromosome pairing and normal recombination, and synaptonemal complex (SC) assembly. Required for the proper association of PAIR2 with chromosomes. This Oryza sativa subsp. japonica (Rice) protein is Meiosis-specific protein PAIR3.